The sequence spans 333 residues: Fructose-1,6-bisphosphatase class 1 (333 aa).

Glutamate 92, aspartate 113, leucine 115, and aspartate 116 together coordinate Mg(2+). Residues 116–119 (DGSS), asparagine 209, tyrosine 242, and lysine 272 each bind substrate. Glutamate 278 provides a ligand contact to Mg(2+).

Belongs to the FBPase class 1 family. Homotetramer. Mg(2+) is required as a cofactor.

The protein resides in the cytoplasm. The catalysed reaction is beta-D-fructose 1,6-bisphosphate + H2O = beta-D-fructose 6-phosphate + phosphate. It functions in the pathway carbohydrate biosynthesis; Calvin cycle. The sequence is that of Fructose-1,6-bisphosphatase class 1 from Pelodictyon phaeoclathratiforme (strain DSM 5477 / BU-1).